We begin with the raw amino-acid sequence, 176 residues long: Transcriptional repressor NrdR (176 aa).

Residues 3-34 fold into a zinc finger; sequence CPYCGSLETQVKDSRPTDDASAIRRRRVCPDC. The ATP-cone domain occupies 49 to 139; it reads LTVLKKSGRR…VYRNFREARD (91 aa). Residues 147 to 176 form a disordered region; it reads LDGAAQPEAPSKDDGGTDEPPAKTRAPTRA.

This sequence belongs to the NrdR family. Requires Zn(2+) as cofactor.

Functionally, negatively regulates transcription of bacterial ribonucleotide reductase nrd genes and operons by binding to NrdR-boxes. The chain is Transcriptional repressor NrdR from Methylocella silvestris (strain DSM 15510 / CIP 108128 / LMG 27833 / NCIMB 13906 / BL2).